A 401-amino-acid chain; its full sequence is MDRRVVITGIGGLCGLGTNAASIWKEMREGPSAISPIITTDLYDLEGTVGLEIKAIPEHDIPRKQLVSMDRFSLLAVIAATEAMKQAGLSCDEQNAHRFGAAMGLGGPGWDTIEETYRSILLDGVTRARIFTAPKGMPSAAAGHVSIFLGLRGPVFGVTSACAAGNHAIASAVDQIRLGRADVMLAGGSDAPLTWGVLKSWEALRVLAPDTCRPFSADRKGVVLGEGAGMAVLESYEHAAARGATMLAEVAGIGLSGDAYDIVMPSIEGPEAAMRSCLADAELNPDDVDYLNAHGTGTVANDEMETAAIKRVFGDHAFQMSVSSTKSMHAHCLGAASALEMIACVMAIQEGVIPPTANYREPDPQCDLDVTPNVPREQRCGSMSNAFAMGGTNAVLAFRQV.

Residues 2-400 enclose the Ketosynthase family 3 (KS3) domain; it reads DRRVVITGIG…GTNAVLAFRQ (399 aa). Residues cysteine 162, histidine 294, and histidine 331 each act as for beta-ketoacyl synthase activity in the active site. The helical transmembrane segment at 329 to 348 threads the bilayer; the sequence is HAHCLGAASALEMIACVMAI.

The protein belongs to the thiolase-like superfamily. Beta-ketoacyl-ACP synthases family.

Its subcellular location is the cell inner membrane. In terms of biological role, proposed to synthesize NOD factor fatty acyl chain. Involved in the synthesis of a highly unsaturated fatty acid moiety, which forms part of a lipo-oligosaccharide that is responsible for host specificity. The protein is Nodulation protein E (nodE) of Rhizobium leguminosarum bv. trifolii.